Here is a 987-residue protein sequence, read N- to C-terminus: Leucine--tRNA ligase (987 aa).

The short motif at 69–80 (PYPSGKGLHVGH) is the 'HIGH' region element. The short motif at 760 to 764 (KMGKS) is the 'KMSKS' region element. ATP is bound at residue K763.

This sequence belongs to the class-I aminoacyl-tRNA synthetase family.

Its subcellular location is the cytoplasm. The enzyme catalyses tRNA(Leu) + L-leucine + ATP = L-leucyl-tRNA(Leu) + AMP + diphosphate. This Bifidobacterium longum (strain NCC 2705) protein is Leucine--tRNA ligase.